The following is a 151-amino-acid chain: Small ribosomal subunit protein uS19 (151 aa).

This sequence belongs to the universal ribosomal protein uS19 family.

Its function is as follows. Protein S19 forms a complex with S13 that binds strongly to the 16S ribosomal RNA. The protein is Small ribosomal subunit protein uS19 (rps19) of Thermoplasma acidophilum (strain ATCC 25905 / DSM 1728 / JCM 9062 / NBRC 15155 / AMRC-C165).